Consider the following 387-residue polypeptide: 8-amino-7-oxononanoate synthase (387 aa).

Pyridoxal 5'-phosphate is bound at residue 109–110; it reads GY. His134 serves as a coordination point for substrate. Residues Ser182, His214, and Thr242 each contribute to the pyridoxal 5'-phosphate site. Lys245 is subject to N6-(pyridoxal phosphate)lysine. Substrate is bound at residue Thr359.

This sequence belongs to the class-II pyridoxal-phosphate-dependent aminotransferase family. BioF subfamily. As to quaternary structure, homodimer. It depends on pyridoxal 5'-phosphate as a cofactor.

The enzyme catalyses 6-carboxyhexanoyl-[ACP] + L-alanine + H(+) = (8S)-8-amino-7-oxononanoate + holo-[ACP] + CO2. The protein operates within cofactor biosynthesis; biotin biosynthesis. Catalyzes the decarboxylative condensation of pimeloyl-[acyl-carrier protein] and L-alanine to produce 8-amino-7-oxononanoate (AON), [acyl-carrier protein], and carbon dioxide. This is 8-amino-7-oxononanoate synthase from Haemophilus ducreyi (strain 35000HP / ATCC 700724).